The following is a 268-amino-acid chain: Tryptophan synthase alpha chain (268 aa).

Residues Glu-40 and Asp-51 each act as proton acceptor in the active site.

The protein belongs to the TrpA family. In terms of assembly, tetramer of two alpha and two beta chains.

It carries out the reaction (1S,2R)-1-C-(indol-3-yl)glycerol 3-phosphate + L-serine = D-glyceraldehyde 3-phosphate + L-tryptophan + H2O. It participates in amino-acid biosynthesis; L-tryptophan biosynthesis; L-tryptophan from chorismate: step 5/5. Its function is as follows. The alpha subunit is responsible for the aldol cleavage of indoleglycerol phosphate to indole and glyceraldehyde 3-phosphate. In Geobacillus kaustophilus (strain HTA426), this protein is Tryptophan synthase alpha chain.